We begin with the raw amino-acid sequence, 366 residues long: DNA primase large subunit PriL (366 aa).

Cys-227, Cys-298, Cys-307, and Cys-314 together coordinate [4Fe-4S] cluster.

Belongs to the eukaryotic-type primase large subunit family. As to quaternary structure, heterodimer of a small subunit (PriS) and a large subunit (PriL). It depends on [4Fe-4S] cluster as a cofactor.

In terms of biological role, regulatory subunit of DNA primase, an RNA polymerase that catalyzes the synthesis of short RNA molecules used as primers for DNA polymerase during DNA replication. Stabilizes and modulates the activity of the small subunit, increasing the rate of DNA synthesis, and conferring RNA synthesis capability. The DNA polymerase activity may enable DNA primase to also catalyze primer extension after primer synthesis. May also play a role in DNA repair. In Methanocella arvoryzae (strain DSM 22066 / NBRC 105507 / MRE50), this protein is DNA primase large subunit PriL.